We begin with the raw amino-acid sequence, 487 residues long: Glutamyl-tRNA(Gln) amidotransferase subunit A (487 aa).

Lys-78 (charge relay system) is an active-site residue. The segment covering 135 to 144 (SAYQTTTNPW) has biased composition (polar residues). Positions 135 to 155 (SAYQTTTNPWDASRVPGGSSG) are disordered. Residue Ser-153 is the Charge relay system of the active site. The active-site Acyl-ester intermediate is Ser-177.

This sequence belongs to the amidase family. GatA subfamily. Heterotrimer of A, B and C subunits.

It catalyses the reaction L-glutamyl-tRNA(Gln) + L-glutamine + ATP + H2O = L-glutaminyl-tRNA(Gln) + L-glutamate + ADP + phosphate + H(+). Its function is as follows. Allows the formation of correctly charged Gln-tRNA(Gln) through the transamidation of misacylated Glu-tRNA(Gln) in organisms which lack glutaminyl-tRNA synthetase. The reaction takes place in the presence of glutamine and ATP through an activated gamma-phospho-Glu-tRNA(Gln). The protein is Glutamyl-tRNA(Gln) amidotransferase subunit A of Maridesulfovibrio salexigens (strain ATCC 14822 / DSM 2638 / NCIMB 8403 / VKM B-1763) (Desulfovibrio salexigens).